The following is a 157-amino-acid chain: Ribosome maturation factor RimP (157 aa).

The protein belongs to the RimP family.

The protein localises to the cytoplasm. In terms of biological role, required for maturation of 30S ribosomal subunits. The chain is Ribosome maturation factor RimP from Ligilactobacillus salivarius (strain UCC118) (Lactobacillus salivarius).